The chain runs to 463 residues: Glycine--tRNA ligase (463 aa).

Substrate contacts are provided by Arg98 and Glu170. ATP contacts are provided by residues 202 to 204 (RNE), 212 to 217 (FRTREF), 287 to 288 (EL), and 331 to 334 (GIER). Position 217-221 (217-221 (FEQFE)) interacts with substrate. Residue 327–331 (EPSLG) coordinates substrate.

It belongs to the class-II aminoacyl-tRNA synthetase family. In terms of assembly, homodimer.

Its subcellular location is the cytoplasm. The enzyme catalyses tRNA(Gly) + glycine + ATP = glycyl-tRNA(Gly) + AMP + diphosphate. Functionally, catalyzes the attachment of glycine to tRNA(Gly). This is Glycine--tRNA ligase from Mycoplasmoides gallisepticum (strain R(low / passage 15 / clone 2)) (Mycoplasma gallisepticum).